The sequence spans 312 residues: Pyridoxal kinase (312 aa).

An N-acetylmethionine modification is found at methionine 1. Residues serine 12 and threonine 47 each coordinate pyridoxal. Threonine 47 provides a ligand contact to pyridoxal 5'-phosphate. Serine 59 carries the post-translational modification Phosphoserine. Aspartate 113 contacts ATP. Aspartate 113 contacts Na(+). Residue aspartate 118 participates in Mg(2+) binding. Threonine 148 contributes to the Na(+) binding site. 150-153 (NQFE) provides a ligand contact to ATP. A Phosphoserine modification is found at serine 164. Threonine 186 is a binding site for Na(+). Residue 186–187 (TS) coordinates ATP. At serine 213 the chain carries Phosphoserine. ATP-binding positions include 226 to 228 (VDA) and threonine 233. 234-235 (GD) contributes to the pyridoxal 5'-phosphate binding site. Aspartate 235 acts as the Proton acceptor in catalysis. Serine 285 carries the phosphoserine modification.

It belongs to the pyridoxine kinase family. In terms of assembly, homodimer. Mg(2+) serves as cofactor. The cofactor is Zn(2+). It depends on Co(2+) as a cofactor. Mn(2+) is required as a cofactor. In terms of tissue distribution, ubiquitous. Highly expressed in testis. As to expression, in adult testis and spermatozoa.

Its subcellular location is the cytoplasm. It localises to the cytosol. It carries out the reaction pyridoxal + ATP = pyridoxal 5'-phosphate + ADP + H(+). The enzyme catalyses pyridoxamine + ATP = pyridoxamine 5'-phosphate + ADP + H(+). The catalysed reaction is pyridoxine + ATP = pyridoxine 5'-phosphate + ADP + H(+). It functions in the pathway cofactor metabolism; pyridoxal 5'-phosphate salvage; pyridoxal 5'-phosphate from pyridoxal: step 1/1. The protein operates within cofactor metabolism; pyridoxal 5'-phosphate salvage; pyridoxine 5'-phosphate from pyridoxine: step 1/1. Its pathway is cofactor metabolism; pyridoxal 5'-phosphate salvage; pyridoxamine 5'-phosphate from pyridoxamine: step 1/1. Catalytic activity is inhibited competitively by 4-deoxypyridoxine, and is also inhibited by the benzodiazepine receptor ligands 1012S and ethyl-beta-carboline-3-carboxylate. Inhibited by ginkgotoxin, theophylline, lamotrigine, enprofylline, theobromine, and caffeine. Activity is increased in the presence of K(+)or Na(+). Its function is as follows. Catalyzes the phosphorylation of the dietary vitamin B6 vitamers pyridoxal (PL), pyridoxine (PN) and pyridoxamine (PM) to form pyridoxal 5'-phosphate (PLP), pyridoxine 5'-phosphate (PNP) and pyridoxamine 5'-phosphate (PMP), respectively. PLP is the active form of vitamin B6, and acts as a cofactor for over 140 different enzymatic reactions. This is Pyridoxal kinase from Homo sapiens (Human).